The sequence spans 104 residues: A-type ATP synthase subunit F (104 aa).

It belongs to the V-ATPase F subunit family. As to quaternary structure, has multiple subunits with at least A(3), B(3), C, D, E, F, H, I and proteolipid K(x).

The protein resides in the cell membrane. Its function is as follows. Component of the A-type ATP synthase that produces ATP from ADP in the presence of a proton gradient across the membrane. The chain is A-type ATP synthase subunit F from Thermoplasma volcanium (strain ATCC 51530 / DSM 4299 / JCM 9571 / NBRC 15438 / GSS1).